The following is a 213-amino-acid chain: MAANKSYKSYFLDPLWNNNQPLIAILGICSALAVTTTVNTALTMGLAVSFVTGCSSFFVSLLRKVTPDSVRMITQLIIISLFVIVIDQFLKAFFFDISKTLSVFVGLIITNCIVMGRAESLARNVPPIPAFLDGFASGLGYGWVLVTVSIIREFFGFGTILGLQLIPKCFYASEAHPDGYENFGLMVLAPSAFFLLGIMIWGVNILRSKKERR.

7 helical membrane passes run 21–41, 42–62, 77–97, 101–121, 131–151, 153–173, and 183–203; these read PLIAILGICSALAVTTTVNTA, LTMGLAVSFVTGCSSFFVSLL, IIISLFVIVIDQFLKAFFFDI, LSVFVGLIITNCIVMGRAESL, FLDGFASGLGYGWVLVTVSII, EFFGFGTILGLQLIPKCFYAS, and FGLMVLAPSAFFLLGIMIWGV.

The protein belongs to the NqrDE/RnfAE family. In terms of assembly, composed of six subunits; NqrA, NqrB, NqrC, NqrD, NqrE and NqrF.

The protein resides in the cell inner membrane. The catalysed reaction is a ubiquinone + n Na(+)(in) + NADH + H(+) = a ubiquinol + n Na(+)(out) + NAD(+). NQR complex catalyzes the reduction of ubiquinone-1 to ubiquinol by two successive reactions, coupled with the transport of Na(+) ions from the cytoplasm to the periplasm. NqrA to NqrE are probably involved in the second step, the conversion of ubisemiquinone to ubiquinol. This is Na(+)-translocating NADH-quinone reductase subunit D from Chlamydia abortus (strain DSM 27085 / S26/3) (Chlamydophila abortus).